Here is a 149-residue protein sequence, read N- to C-terminus: Large ribosomal subunit protein bL9 (149 aa).

Belongs to the bacterial ribosomal protein bL9 family.

Binds to the 23S rRNA. The polypeptide is Large ribosomal subunit protein bL9 (Xanthomonas campestris pv. campestris (strain 8004)).